A 273-amino-acid polypeptide reads, in one-letter code: Formamidopyrimidine-DNA glycosylase (273 aa).

The Schiff-base intermediate with DNA role is filled by proline 2. Residue glutamate 3 is the Proton donor of the active site. Catalysis depends on lysine 59, which acts as the Proton donor; for beta-elimination activity. Positions 93, 111, and 154 each coordinate DNA. The FPG-type zinc finger occupies 239 to 273 (KVYGRGGEPCKECGHTLVRIRLAGRSTVFCPCCQV). The active-site Proton donor; for delta-elimination activity is the arginine 263.

The protein belongs to the FPG family. In terms of assembly, monomer. Zn(2+) is required as a cofactor.

The catalysed reaction is Hydrolysis of DNA containing ring-opened 7-methylguanine residues, releasing 2,6-diamino-4-hydroxy-5-(N-methyl)formamidopyrimidine.. The enzyme catalyses 2'-deoxyribonucleotide-(2'-deoxyribose 5'-phosphate)-2'-deoxyribonucleotide-DNA = a 3'-end 2'-deoxyribonucleotide-(2,3-dehydro-2,3-deoxyribose 5'-phosphate)-DNA + a 5'-end 5'-phospho-2'-deoxyribonucleoside-DNA + H(+). Its function is as follows. Involved in base excision repair of DNA damaged by oxidation or by mutagenic agents. Acts as a DNA glycosylase that recognizes and removes damaged bases. Has a preference for oxidized purines, such as 7,8-dihydro-8-oxoguanine (8-oxoG). Has AP (apurinic/apyrimidinic) lyase activity and introduces nicks in the DNA strand. Cleaves the DNA backbone by beta-delta elimination to generate a single-strand break at the site of the removed base with both 3'- and 5'-phosphates. The polypeptide is Formamidopyrimidine-DNA glycosylase (Desulfitobacterium hafniense (strain DSM 10664 / DCB-2)).